The primary structure comprises 484 residues: Coronin-1B (484 aa).

Ser2 carries the post-translational modification Phosphoserine. WD repeat units follow at residues 80-120 (GHTG…LTSP), 130-170 (GHTK…ELYR), 174-213 (LHPDLIYNVSWNHNGSLFCTACKDKSVRIIDPRRGTLVAE), 217-260 (AHEG…EPMA), and 265-305 (DSSN…PYIH). A coiled-coil region spans residues 447–481 (KLEEVMHGLRALRVLVKEQGERISRLEEHLGRMEN).

The protein belongs to the WD repeat coronin family. Forms homooligomers, but does not form complexes with the other coronins. Interacts with Arp2/3 complex components, including ACTR2, ARPC1B and ARPC2. Binds actin. Phosphorylation on Ser-2 regulates the interaction with the Arp2/3 complex and cell motility in fibroblasts. Phosphorylation does not seem to affect subcellular location.

The protein resides in the cytoplasm. It localises to the cytoskeleton. The protein localises to the stress fiber. Its function is as follows. Regulates leading edge dynamics and cell motility in fibroblasts. May be involved in cytokinesis and signal transduction. This is Coronin-1B (Coro1b) from Rattus norvegicus (Rat).